The primary structure comprises 289 residues: UDP-3-O-acyl-N-acetylglucosamine deacetylase (289 aa).

The Zn(2+) site is built by His-79, His-236, and Asp-240. His-263 (proton donor) is an active-site residue.

This sequence belongs to the LpxC family. It depends on Zn(2+) as a cofactor.

The enzyme catalyses a UDP-3-O-[(3R)-3-hydroxyacyl]-N-acetyl-alpha-D-glucosamine + H2O = a UDP-3-O-[(3R)-3-hydroxyacyl]-alpha-D-glucosamine + acetate. Its pathway is glycolipid biosynthesis; lipid IV(A) biosynthesis; lipid IV(A) from (3R)-3-hydroxytetradecanoyl-[acyl-carrier-protein] and UDP-N-acetyl-alpha-D-glucosamine: step 2/6. Catalyzes the hydrolysis of UDP-3-O-myristoyl-N-acetylglucosamine to form UDP-3-O-myristoylglucosamine and acetate, the committed step in lipid A biosynthesis. The sequence is that of UDP-3-O-acyl-N-acetylglucosamine deacetylase from Rickettsia typhi (strain ATCC VR-144 / Wilmington).